A 417-amino-acid chain; its full sequence is Multifunctional CCA protein (417 aa).

ATP is bound by residues Gly-8 and Arg-11. CTP contacts are provided by Gly-8 and Arg-11. Asp-21 and Asp-23 together coordinate Mg(2+). ATP contacts are provided by Arg-91, Arg-137, and Arg-140. CTP is bound by residues Arg-91, Arg-137, and Arg-140. The HD domain occupies 225–326 (SGIHTLMTLQ…LNVLKKTDAF (102 aa)).

It belongs to the tRNA nucleotidyltransferase/poly(A) polymerase family. Bacterial CCA-adding enzyme type 1 subfamily. Monomer. Can also form homodimers and oligomers. It depends on Mg(2+) as a cofactor. Ni(2+) serves as cofactor.

It catalyses the reaction a tRNA precursor + 2 CTP + ATP = a tRNA with a 3' CCA end + 3 diphosphate. The enzyme catalyses a tRNA with a 3' CCA end + 2 CTP + ATP = a tRNA with a 3' CCACCA end + 3 diphosphate. In terms of biological role, catalyzes the addition and repair of the essential 3'-terminal CCA sequence in tRNAs without using a nucleic acid template. Adds these three nucleotides in the order of C, C, and A to the tRNA nucleotide-73, using CTP and ATP as substrates and producing inorganic pyrophosphate. tRNA 3'-terminal CCA addition is required both for tRNA processing and repair. Also involved in tRNA surveillance by mediating tandem CCA addition to generate a CCACCA at the 3' terminus of unstable tRNAs. While stable tRNAs receive only 3'-terminal CCA, unstable tRNAs are marked with CCACCA and rapidly degraded. This Neisseria meningitidis serogroup C (strain 053442) protein is Multifunctional CCA protein.